Reading from the N-terminus, the 432-residue chain is Adenylosuccinate synthetase (432 aa).

GTP is bound by residues 13–19 (GDEGKGK) and 41–43 (GHT). Residue Asp14 is the Proton acceptor of the active site. Residues Asp14 and Gly41 each contribute to the Mg(2+) site. IMP contacts are provided by residues 14-17 (DEGK), 39-42 (NAGH), Thr130, Arg144, Gln225, Thr240, and Arg304. The active-site Proton donor is the His42. 300–306 (AVTGRPR) provides a ligand contact to substrate. Residues Arg306, 332–334 (KLD), and 415–417 (STG) each bind GTP.

This sequence belongs to the adenylosuccinate synthetase family. As to quaternary structure, homodimer. Mg(2+) is required as a cofactor.

Its subcellular location is the cytoplasm. It catalyses the reaction IMP + L-aspartate + GTP = N(6)-(1,2-dicarboxyethyl)-AMP + GDP + phosphate + 2 H(+). The protein operates within purine metabolism; AMP biosynthesis via de novo pathway; AMP from IMP: step 1/2. Its function is as follows. Plays an important role in the de novo pathway of purine nucleotide biosynthesis. Catalyzes the first committed step in the biosynthesis of AMP from IMP. This is Adenylosuccinate synthetase from Actinobacillus pleuropneumoniae serotype 3 (strain JL03).